Reading from the N-terminus, the 148-residue chain is Ribonuclease pancreatic (148 aa).

The signal sequence occupies residues 1 to 25 (MGLEKSLILLPLLVLVFGWVQPSLG). Substrate contacts are provided by lysine 32 and arginine 35. Histidine 37 (proton acceptor) is an active-site residue. Intrachain disulfides connect cysteine 50/cysteine 108, cysteine 64/cysteine 119, cysteine 82/cysteine 134, and cysteine 89/cysteine 96. N-linked (GlcNAc...) asparagine glycosylation is present at asparagine 58. Residue 65 to 69 (KPVNT) participates in substrate binding. The N-linked (GlcNAc...) asparagine glycan is linked to asparagine 86. Substrate-binding residues include lysine 90 and arginine 109. Histidine 143 serves as the catalytic Proton donor.

Belongs to the pancreatic ribonuclease family. Monomer. Interacts with and forms tight 1:1 complexes with RNH1. Dimerization of two such complexes may occur. Interaction with RNH1 inhibits this protein. In terms of tissue distribution, pancreas.

The protein localises to the secreted. It catalyses the reaction an [RNA] containing cytidine + H2O = an [RNA]-3'-cytidine-3'-phosphate + a 5'-hydroxy-ribonucleotide-3'-[RNA].. The catalysed reaction is an [RNA] containing uridine + H2O = an [RNA]-3'-uridine-3'-phosphate + a 5'-hydroxy-ribonucleotide-3'-[RNA].. Its function is as follows. Endonuclease that catalyzes the cleavage of RNA on the 3' side of pyrimidine nucleotides. Acts on single-stranded and double-stranded RNA. This is Ribonuclease pancreatic (RNASE1) from Myodes glareolus (Bank vole).